A 548-amino-acid polypeptide reads, in one-letter code: Chaperonin GroEL (548 aa).

Residues 30–33, lysine 51, 87–91, glycine 415, and aspartate 495 contribute to the ATP site; these read TLGP and DGTTT.

The protein belongs to the chaperonin (HSP60) family. As to quaternary structure, forms a cylinder of 14 subunits composed of two heptameric rings stacked back-to-back. Interacts with the co-chaperonin GroES.

It localises to the cytoplasm. It carries out the reaction ATP + H2O + a folded polypeptide = ADP + phosphate + an unfolded polypeptide.. Functionally, together with its co-chaperonin GroES, plays an essential role in assisting protein folding. The GroEL-GroES system forms a nano-cage that allows encapsulation of the non-native substrate proteins and provides a physical environment optimized to promote and accelerate protein folding. The polypeptide is Chaperonin GroEL (Photorhabdus laumondii subsp. laumondii (strain DSM 15139 / CIP 105565 / TT01) (Photorhabdus luminescens subsp. laumondii)).